Here is a 330-residue protein sequence, read N- to C-terminus: Tryptophan--tRNA ligase (330 aa).

ATP contacts are provided by residues 6–8 (QPT) and 14–15 (GN). The 'HIGH' region signature appears at 7 to 15 (PTGSLHLGN). An L-tryptophan-binding site is contributed by aspartate 130. ATP-binding positions include 142–144 (GED), valine 185, and 194–198 (KMSKS). The 'KMSKS' region signature appears at 194–198 (KMSKS).

Belongs to the class-I aminoacyl-tRNA synthetase family. Homodimer.

It is found in the cytoplasm. It carries out the reaction tRNA(Trp) + L-tryptophan + ATP = L-tryptophyl-tRNA(Trp) + AMP + diphosphate + H(+). Its function is as follows. Catalyzes the attachment of tryptophan to tRNA(Trp). The polypeptide is Tryptophan--tRNA ligase (Thermosynechococcus vestitus (strain NIES-2133 / IAM M-273 / BP-1)).